A 245-amino-acid chain; its full sequence is NAD(P)H-hydrate epimerase (245 aa).

The YjeF N-terminal domain maps to 21-221; sequence MREIDRLAVQ…DLGIPPAVYT (201 aa). 72–76 contributes to the (6S)-NADPHX binding site; it reads GNGGG. K(+) is bound by residues N73 and D135. (6S)-NADPHX-binding positions include 139 to 145 and D168; that span reads GYSLLGA. Residue S171 coordinates K(+).

This sequence belongs to the NnrE/AIBP family. K(+) is required as a cofactor.

It carries out the reaction (6R)-NADHX = (6S)-NADHX. It catalyses the reaction (6R)-NADPHX = (6S)-NADPHX. Functionally, catalyzes the epimerization of the S- and R-forms of NAD(P)HX, a damaged form of NAD(P)H that is a result of enzymatic or heat-dependent hydration. This is a prerequisite for the S-specific NAD(P)H-hydrate dehydratase to allow the repair of both epimers of NAD(P)HX. In Dehalogenimonas lykanthroporepellens (strain ATCC BAA-1523 / JCM 15061 / BL-DC-9), this protein is NAD(P)H-hydrate epimerase.